The following is a 100-amino-acid chain: MIGLTHYLILASLVFVIGLVGIMRRRNLIMLFFSSEILLNSANIALAAISKYYFDLTGQIIAFFIVAIAASEVAVGLGLLVLWYKKTGSISLDSMTNMKG.

Transmembrane regions (helical) follow at residues Ile2 to Ile22, Ile29 to Ile49, and Ile60 to Leu80.

The protein belongs to the complex I subunit 4L family. As to quaternary structure, NDH-1 is composed of 14 different subunits. Subunits NuoA, H, J, K, L, M, N constitute the membrane sector of the complex.

It localises to the cell inner membrane. It catalyses the reaction a quinone + NADH + 5 H(+)(in) = a quinol + NAD(+) + 4 H(+)(out). In terms of biological role, NDH-1 shuttles electrons from NADH, via FMN and iron-sulfur (Fe-S) centers, to quinones in the respiratory chain. The immediate electron acceptor for the enzyme in this species is believed to be ubiquinone. Couples the redox reaction to proton translocation (for every two electrons transferred, four hydrogen ions are translocated across the cytoplasmic membrane), and thus conserves the redox energy in a proton gradient. The chain is NADH-quinone oxidoreductase subunit K from Campylobacter concisus (strain 13826).